The following is a 61-amino-acid chain: Large ribosomal subunit protein bL32 (61 aa).

This sequence belongs to the bacterial ribosomal protein bL32 family.

In Syntrophus aciditrophicus (strain SB), this protein is Large ribosomal subunit protein bL32.